The following is a 137-amino-acid chain: MSEEQVNIKKKEKWGIAHIYSSFNNTIIHITDITGAETISRWSGGMVVKADRDEPSPYAAMLAARRAAEEALEKGIVGVHIRVRAPGGSKSKTPGPGAQAAIRALARAGLKIGRVEDVTPIPHDGTRPKGGRRGRRV.

The disordered stretch occupies residues 116-137 (EDVTPIPHDGTRPKGGRRGRRV).

Belongs to the universal ribosomal protein uS11 family. Part of the 30S ribosomal subunit.

Functionally, located on the platform of the 30S subunit. This chain is Small ribosomal subunit protein uS11, found in Pyrococcus furiosus (strain ATCC 43587 / DSM 3638 / JCM 8422 / Vc1).